We begin with the raw amino-acid sequence, 344 residues long: Prickle-like protein 4 (344 aa).

The region spanning 1-81 is the PET domain; it reads MSPQGPAVLS…ARLVLPKLEG (81 aa). 2 consecutive LIM zinc-binding domains span residues 82 to 147 and 148 to 207; these read HTCE…LLRP and RCPA…RYSD. The segment at 253-344 is disordered; that stretch reads GSSLQTQRGL…NASKTHCTMC (92 aa). Positions 257–271 are enriched in polar residues; sequence QTQRGLPGSSPQQEN. The span at 272 to 296 shows a compositional bias: basic and acidic residues; it reads RPGDKAEAPKGQEQCRLETIRDPKD. The span at 322–344 shows a compositional bias: polar residues; it reads SWKTPGSLQAEDSNASKTHCTMC.

This sequence belongs to the prickle / espinas / testin family. As to expression, expressed in a broad range of normal tissues as well as in hepatocellular carcinoma, breast cancer and prostate cancer tissues.

This chain is Prickle-like protein 4 (PRICKLE4), found in Homo sapiens (Human).